The following is a 139-amino-acid chain: Protein AC53 (139 aa).

Its subcellular location is the host cytoplasm. It is found in the host nucleus. Its function is as follows. Plays a role in nucleocapsid assembly. The polypeptide is Protein AC53 (AC53) (Lepidoptera (butterflies and moths)).